A 478-amino-acid chain; its full sequence is Serine hydroxymethyltransferase (478 aa).

(6S)-5,6,7,8-tetrahydrofolate is bound by residues leucine 161 and 165–167; that span reads GHL. Lysine 273 bears the N6-(pyridoxal phosphate)lysine mark. Residue glutamate 291 coordinates (6S)-5,6,7,8-tetrahydrofolate.

Belongs to the SHMT family. As to quaternary structure, homodimer. The cofactor is pyridoxal 5'-phosphate.

The protein localises to the cytoplasm. It carries out the reaction (6R)-5,10-methylene-5,6,7,8-tetrahydrofolate + glycine + H2O = (6S)-5,6,7,8-tetrahydrofolate + L-serine. Its pathway is one-carbon metabolism; tetrahydrofolate interconversion. The protein operates within amino-acid biosynthesis; glycine biosynthesis; glycine from L-serine: step 1/1. In terms of biological role, catalyzes the reversible interconversion of serine and glycine with tetrahydrofolate (THF) serving as the one-carbon carrier. This reaction serves as the major source of one-carbon groups required for the biosynthesis of purines, thymidylate, methionine, and other important biomolecules. Also exhibits THF-independent aldolase activity toward beta-hydroxyamino acids, producing glycine and aldehydes, via a retro-aldol mechanism. This chain is Serine hydroxymethyltransferase, found in Salinispora tropica (strain ATCC BAA-916 / DSM 44818 / JCM 13857 / NBRC 105044 / CNB-440).